A 391-amino-acid chain; its full sequence is Sister chromatid cohesion protein DCC1 (391 aa).

It belongs to the DCC1 family. Component of the ctf18-RFC complex which consists of ctf18, ctf8, dscc1 and the RFC complex.

It localises to the nucleus. Its function is as follows. Loads pcna onto primed templates regulating velocity, spacing and restart activity of replication forks. May couple DNA replication to sister chromatid cohesion. The polypeptide is Sister chromatid cohesion protein DCC1 (dscc1) (Xenopus tropicalis (Western clawed frog)).